Reading from the N-terminus, the 226-residue chain is Phosphatidylserine decarboxylase proenzyme (226 aa).

S184 acts as the Schiff-base intermediate with substrate; via pyruvic acid in catalysis. A Pyruvic acid (Ser); by autocatalysis modification is found at S184.

This sequence belongs to the phosphatidylserine decarboxylase family. PSD-A subfamily. As to quaternary structure, heterodimer of a large membrane-associated beta subunit and a small pyruvoyl-containing alpha subunit. The cofactor is pyruvate. Post-translationally, is synthesized initially as an inactive proenzyme. Formation of the active enzyme involves a self-maturation process in which the active site pyruvoyl group is generated from an internal serine residue via an autocatalytic post-translational modification. Two non-identical subunits are generated from the proenzyme in this reaction, and the pyruvate is formed at the N-terminus of the alpha chain, which is derived from the carboxyl end of the proenzyme. The post-translation cleavage follows an unusual pathway, termed non-hydrolytic serinolysis, in which the side chain hydroxyl group of the serine supplies its oxygen atom to form the C-terminus of the beta chain, while the remainder of the serine residue undergoes an oxidative deamination to produce ammonia and the pyruvoyl prosthetic group on the alpha chain.

It is found in the cell membrane. The enzyme catalyses a 1,2-diacyl-sn-glycero-3-phospho-L-serine + H(+) = a 1,2-diacyl-sn-glycero-3-phosphoethanolamine + CO2. It participates in phospholipid metabolism; phosphatidylethanolamine biosynthesis; phosphatidylethanolamine from CDP-diacylglycerol: step 2/2. Its function is as follows. Catalyzes the formation of phosphatidylethanolamine (PtdEtn) from phosphatidylserine (PtdSer). This chain is Phosphatidylserine decarboxylase proenzyme, found in Ehrlichia chaffeensis (strain ATCC CRL-10679 / Arkansas).